The sequence spans 275 residues: ADP-dependent (S)-NAD(P)H-hydrate dehydratase (275 aa).

The YjeF C-terminal domain occupies 5–273 (TDEILAKVIK…EEIPLFMKKY (269 aa)). 3 residues coordinate (6S)-NADPHX: Ala-40, Gly-103, and His-151. Gly-214 is an AMP binding site. A (6S)-NADPHX-binding site is contributed by Asp-215.

This sequence belongs to the NnrD/CARKD family. As to quaternary structure, homotetramer. It depends on Mg(2+) as a cofactor.

The catalysed reaction is (6S)-NADHX + ADP = AMP + phosphate + NADH + H(+). It carries out the reaction (6S)-NADPHX + ADP = AMP + phosphate + NADPH + H(+). In terms of biological role, catalyzes the dehydration of the S-form of NAD(P)HX at the expense of ADP, which is converted to AMP. Together with NAD(P)HX epimerase, which catalyzes the epimerization of the S- and R-forms, the enzyme allows the repair of both epimers of NAD(P)HX, a damaged form of NAD(P)H that is a result of enzymatic or heat-dependent hydration. This is ADP-dependent (S)-NAD(P)H-hydrate dehydratase from Lactococcus lactis subsp. lactis (strain IL1403) (Streptococcus lactis).